A 30-amino-acid polypeptide reads, in one-letter code: Scolopendra 20528.11 Da toxin (30 aa).

Belongs to the CRISP family. Venom allergen 5-like subfamily. In terms of processing, contains 3 disulfide bonds. Expressed by the venom gland.

It localises to the secreted. In Scolopendra angulata (Barbados giant red centipede), this protein is Scolopendra 20528.11 Da toxin.